A 239-amino-acid polypeptide reads, in one-letter code: Pre-mRNA-splicing factor isy1 (239 aa).

The protein belongs to the ISY1 family. Associated with the spliceosome.

The protein resides in the cytoplasm. Its subcellular location is the nucleus. Functionally, involved in pre-mRNA splicing. This Neurospora crassa (strain ATCC 24698 / 74-OR23-1A / CBS 708.71 / DSM 1257 / FGSC 987) protein is Pre-mRNA-splicing factor isy1 (msp-7).